A 51-amino-acid polypeptide reads, in one-letter code: Insulin (51 aa).

3 cysteine pairs are disulfide-bonded: Cys-7/Cys-37, Cys-19/Cys-50, and Cys-36/Cys-41.

It belongs to the insulin family. Heterodimer of a B chain and an A chain linked by two disulfide bonds.

It localises to the secreted. Its function is as follows. Insulin decreases blood glucose concentration. It increases cell permeability to monosaccharides, amino acids and fatty acids. It accelerates glycolysis, the pentose phosphate cycle, and glycogen synthesis in liver. This chain is Insulin (INS), found in Camelus dromedarius (Dromedary).